Reading from the N-terminus, the 142-residue chain is Nucleoside diphosphate kinase (142 aa).

Residues lysine 9, phenylalanine 57, arginine 85, threonine 91, arginine 102, and asparagine 112 each contribute to the ATP site. The segment at 87-106 (AMGATDPAKSEKGTVRGDLG) is disordered. The active-site Pros-phosphohistidine intermediate is the histidine 115.

The protein belongs to the NDK family. As to quaternary structure, homotetramer. Mg(2+) is required as a cofactor.

The protein resides in the cytoplasm. It catalyses the reaction a 2'-deoxyribonucleoside 5'-diphosphate + ATP = a 2'-deoxyribonucleoside 5'-triphosphate + ADP. The catalysed reaction is a ribonucleoside 5'-diphosphate + ATP = a ribonucleoside 5'-triphosphate + ADP. Its function is as follows. Major role in the synthesis of nucleoside triphosphates other than ATP. The ATP gamma phosphate is transferred to the NDP beta phosphate via a ping-pong mechanism, using a phosphorylated active-site intermediate. The polypeptide is Nucleoside diphosphate kinase (Dehalococcoides mccartyi (strain ATCC BAA-2266 / KCTC 15142 / 195) (Dehalococcoides ethenogenes (strain 195))).